The following is an 832-amino-acid chain: MSYQMPQNRTMSHNPYNSSDMPMPSAKEQTLMWQQNSYLGDSGIHSGAVTQVPSLSGKDDDMEDDPLMFDMDQGFSQNFTQDQVDDMNQQLSQTRSQRVRAAMFPETLEEGIEIPSTQFDPQQPTAVQRLSEPSQMLKHAVVNLINYQDDADLATRAIPELIKLLNDEDQVVVSQAAMMVHQLSKKEASRHAIMNSPQMVAALVRALSQSNDLETTKGAVGTLHNLSHHRQGLLAIFKSGGIPALVKLLSSPVESVLFYAITTLHNLLLHQDGSKMAVRLAGGLQKMVALLQRNNVKFLAIVTDCLQILAYGNQESKLIILASTGPSELVRIMRSYDYEKLLWTTSRVLKVLSVCSSNKPAIVEAGGMQALAMHLGNPSQRLVQNCLWTLRNLSDAATKVDGLETLLSGLVTVLGSSDVNVVTCAAGILSNLTCNNQRNKVTVCQVGGVEALVGTIINAGDREEITEPAVCALRHLTSRHPESESAQNIVRNGYGLPVIVKLLNPPSRWPLIKAVIGLIRNLALCPSNAAPLREHGAIHLLVRLLFKAFQDTQRQRSSVATNGSQPPGAYADGVRMEEIVEGTVGALHILSKEELNRQLIRQQNVISIFVQLLFYNDIENIQRVAAGVLCELAVDKEVAEMIEAEGATAPLTELLNSANEGVATYAAAVLFKMSEDKSMDYKKRFSSELTTLPVFRDDTMWNNGELGIGPDLQDILSPDQAYEGLYGQGPPSVHSSHGGRAFQQGYDTLPIDSMQGLEIGGGGNAGPAGSNPNAGNNPGAGGPPSGQPTSPYAMDMDVGEMDASELTFDHLDVMPSPPQDNNQVAAWYDTDL.

The segment covering 1-20 has biased composition (polar residues); that stretch reads MSYQMPQNRTMSHNPYNSSD. The interval 1–24 is disordered; the sequence is MSYQMPQNRTMSHNPYNSSDMPMP. ARM repeat units lie at residues 146 to 185, 188 to 228, 230 to 269, 272 to 311, 356 to 395, 397 to 434, 483 to 524, 594 to 634, and 636 to 675; these read NYQD…QLSK, ASRH…NLSH, RQGL…NLLL, DGSK…ILAY, SSNK…NLSD, ATKV…NLTC, SESA…NLAL, ELNR…ELAV, and KEVA…KMSE. Residues 721–832 are disordered; sequence AYEGLYGQGP…QVAAWYDTDL (112 aa). The span at 767–777 shows a compositional bias: low complexity; sequence PAGSNPNAGNN.

The protein belongs to the beta-catenin family.

The protein localises to the cytoplasm. It is found in the cell membrane. The protein resides in the cell junction. Its subcellular location is the adherens junction. Functionally, may associate with CadN and participate in the transmission of developmental information. Can associate with alpha-catenin. Accumulates through wg signaling; arm function in wg signal transduction is required early in development for determination of neuroblast fate. Arm and Abl proteins function cooperatively at adherens junctions in both the CNS and epidermis. The sequence is that of Armadillo segment polarity protein from Aedes aegypti (Yellowfever mosquito).